We begin with the raw amino-acid sequence, 100 residues long: DNA-binding protein HU (100 aa).

It belongs to the bacterial histone-like protein family.

Histone-like DNA-binding protein which is capable of wrapping DNA to stabilize it, and thus to prevent its denaturation under extreme environmental conditions. The sequence is that of DNA-binding protein HU (hup) from Synechocystis sp. (strain ATCC 27184 / PCC 6803 / Kazusa).